The sequence spans 197 residues: NADH-quinone oxidoreductase subunit C (197 aa).

The protein belongs to the complex I 30 kDa subunit family. As to quaternary structure, NDH-1 is composed of 14 different subunits. Subunits NuoB, C, D, E, F, and G constitute the peripheral sector of the complex.

The protein localises to the cell inner membrane. The catalysed reaction is a quinone + NADH + 5 H(+)(in) = a quinol + NAD(+) + 4 H(+)(out). In terms of biological role, NDH-1 shuttles electrons from NADH, via FMN and iron-sulfur (Fe-S) centers, to quinones in the respiratory chain. The immediate electron acceptor for the enzyme in this species is believed to be ubiquinone. Couples the redox reaction to proton translocation (for every two electrons transferred, four hydrogen ions are translocated across the cytoplasmic membrane), and thus conserves the redox energy in a proton gradient. The sequence is that of NADH-quinone oxidoreductase subunit C from Neisseria gonorrhoeae (strain ATCC 700825 / FA 1090).